The sequence spans 404 residues: Argininosuccinate synthase (404 aa).

ATP contacts are provided by residues 10-18 (AYSGGLDTS) and Ala37. L-citrulline is bound by residues Tyr90 and Ser95. Residue Gly120 coordinates ATP. L-aspartate-binding residues include Thr122, Asn126, and Asp127. Asn126 is a binding site for L-citrulline. Residues Arg130, Ser181, Ser190, Glu266, and Tyr278 each coordinate L-citrulline.

The protein belongs to the argininosuccinate synthase family. Type 1 subfamily. In terms of assembly, homotetramer.

It localises to the cytoplasm. The catalysed reaction is L-citrulline + L-aspartate + ATP = 2-(N(omega)-L-arginino)succinate + AMP + diphosphate + H(+). It participates in amino-acid biosynthesis; L-arginine biosynthesis; L-arginine from L-ornithine and carbamoyl phosphate: step 2/3. The polypeptide is Argininosuccinate synthase (Erythrobacter litoralis (strain HTCC2594)).